We begin with the raw amino-acid sequence, 157 residues long: Transcriptional regulator MraZ (157 aa).

SpoVT-AbrB domains lie at 7-54 (TYEC…PMKE) and 83-126 (VRII…DKDL).

It belongs to the MraZ family. As to quaternary structure, forms oligomers.

The protein resides in the cytoplasm. It is found in the nucleoid. In Flavobacterium psychrophilum (strain ATCC 49511 / DSM 21280 / CIP 103535 / JIP02/86), this protein is Transcriptional regulator MraZ.